A 141-amino-acid chain; its full sequence is Transcription antitermination protein NusB (141 aa).

It belongs to the NusB family.

Involved in transcription antitermination. Required for transcription of ribosomal RNA (rRNA) genes. Binds specifically to the boxA antiterminator sequence of the ribosomal RNA (rrn) operons. The sequence is that of Transcription antitermination protein NusB from Neisseria meningitidis serogroup C (strain 053442).